Here is a 284-residue protein sequence, read N- to C-terminus: F-box only protein 6 (284 aa).

Residues 1–48 form the F-box domain; sequence MVNINELPENILLELFTHVPAPQLLRNCRLVCSLWRDLIDVMTLWKRK. Residues 69–250 enclose the FBA domain; that stretch reads FYILCSLQRN…VTNSSIIVSH (182 aa). 5 positions are modified to phosphoserine: Ser249, Ser268, Ser275, Ser278, and Ser283.

Part of a SCF (SKP1-cullin-F-box) protein ligase complex. Interacts with VCP, CHEK1 and CUL1.

The protein resides in the cytoplasm. It functions in the pathway protein modification; protein ubiquitination. In terms of biological role, substrate-recognition component of some SCF (SKP1-CUL1-F-box protein)-type E3 ubiquitin ligase complexes. Involved in endoplasmic reticulum-associated degradation pathway (ERAD) for misfolded lumenal proteins by recognizing and binding sugar chains on unfolded glycoproteins that are retrotranslocated into the cytosol and promoting their ubiquitination and subsequent degradation. Able to recognize and bind denatured glycoproteins, which are modified with not only high-mannose but also complex-type oligosaccharides. Also recognizes sulfated glycans. Also involved in DNA damage response by specifically recognizing activated CHEK1 (phosphorylated on 'Ser-345'), promoting its ubiquitination and degradation. Ubiquitination of CHEK1 is required to ensure that activated CHEK1 does not accumulate as cells progress through S phase, or when replication forks encounter transient impediments during normal DNA replication. This Rattus norvegicus (Rat) protein is F-box only protein 6 (Fbxo6).